The following is a 519-amino-acid chain: ATP synthase subunit beta, mitochondrial (519 aa).

G195–T202 contributes to the ATP binding site.

The protein belongs to the ATPase alpha/beta chains family. In terms of assembly, F-type ATPases have 2 components, CF(1) - the catalytic core - and CF(0) - the membrane proton channel. CF(1) has five subunits: alpha(3), beta(3), gamma(1), delta(1), epsilon(1). CF(0) has three main subunits: a, b and c.

Its subcellular location is the mitochondrion. It localises to the mitochondrion inner membrane. The catalysed reaction is ATP + H2O + 4 H(+)(in) = ADP + phosphate + 5 H(+)(out). Its function is as follows. Mitochondrial membrane ATP synthase (F(1)F(0) ATP synthase or Complex V) produces ATP from ADP in the presence of a proton gradient across the membrane which is generated by electron transport complexes of the respiratory chain. F-type ATPases consist of two structural domains, F(1) - containing the extramembraneous catalytic core, and F(0) - containing the membrane proton channel, linked together by a central stalk and a peripheral stalk. During catalysis, ATP synthesis in the catalytic domain of F(1) is coupled via a rotary mechanism of the central stalk subunits to proton translocation. Subunits alpha and beta form the catalytic core in F(1). Rotation of the central stalk against the surrounding alpha(3)beta(3) subunits leads to hydrolysis of ATP in three separate catalytic sites on the beta subunits. This Neurospora crassa (strain ATCC 24698 / 74-OR23-1A / CBS 708.71 / DSM 1257 / FGSC 987) protein is ATP synthase subunit beta, mitochondrial (atp-2).